A 479-amino-acid chain; its full sequence is Siroheme synthase (479 aa).

A precorrin-2 dehydrogenase /sirohydrochlorin ferrochelatase region spans residues 1 to 202 (MNYLPIFLDL…GRDSEAEAQL (202 aa)). NAD(+) is bound by residues 22-23 (ET) and 43-44 (PA). Phosphoserine is present on S128. Residues 217–479 (GEVYLVGAGP…TPLEAPDHLA (263 aa)) are uroporphyrinogen-III C-methyltransferase. Residue P226 participates in S-adenosyl-L-methionine binding. The active-site Proton acceptor is D249. K271 (proton donor) is an active-site residue. S-adenosyl-L-methionine contacts are provided by residues 302–304 (GGD), I307, 332–333 (TA), M384, and G413.

This sequence in the N-terminal section; belongs to the precorrin-2 dehydrogenase / sirohydrochlorin ferrochelatase family. It in the C-terminal section; belongs to the precorrin methyltransferase family.

It carries out the reaction uroporphyrinogen III + 2 S-adenosyl-L-methionine = precorrin-2 + 2 S-adenosyl-L-homocysteine + H(+). It catalyses the reaction precorrin-2 + NAD(+) = sirohydrochlorin + NADH + 2 H(+). The catalysed reaction is siroheme + 2 H(+) = sirohydrochlorin + Fe(2+). It participates in cofactor biosynthesis; adenosylcobalamin biosynthesis; precorrin-2 from uroporphyrinogen III: step 1/1. The protein operates within cofactor biosynthesis; adenosylcobalamin biosynthesis; sirohydrochlorin from precorrin-2: step 1/1. Its pathway is porphyrin-containing compound metabolism; siroheme biosynthesis; precorrin-2 from uroporphyrinogen III: step 1/1. It functions in the pathway porphyrin-containing compound metabolism; siroheme biosynthesis; siroheme from sirohydrochlorin: step 1/1. It participates in porphyrin-containing compound metabolism; siroheme biosynthesis; sirohydrochlorin from precorrin-2: step 1/1. In terms of biological role, multifunctional enzyme that catalyzes the SAM-dependent methylations of uroporphyrinogen III at position C-2 and C-7 to form precorrin-2 via precorrin-1. Then it catalyzes the NAD-dependent ring dehydrogenation of precorrin-2 to yield sirohydrochlorin. Finally, it catalyzes the ferrochelation of sirohydrochlorin to yield siroheme. The chain is Siroheme synthase from Thiobacillus denitrificans (strain ATCC 25259 / T1).